The following is a 163-amino-acid chain: DNA polymerase epsilon subunit D (163 aa).

Disordered stretches follow at residues 1 to 22 (MPPK…SAGN) and 126 to 163 (RKKD…RTDE). Composition is skewed to basic and acidic residues over residues 126 to 142 (RKKD…DHIS) and 154 to 163 (EGNKRIRTDE).

In terms of assembly, heterotetramer. Consists of four subunits: POL2, DPB2, DPB3 and DPB4.

It localises to the nucleus. Functionally, as accessory component of the DNA polymerase epsilon (DNA polymerase II) participates in chromosomal DNA replication. In Yarrowia lipolytica (strain CLIB 122 / E 150) (Yeast), this protein is DNA polymerase epsilon subunit D (DPB4).